The following is a 365-amino-acid chain: tRNA/tmRNA (uracil-C(5))-methyltransferase (365 aa).

The S-adenosyl-L-methionine site is built by Gln-196, Tyr-224, Asn-229, Glu-245, and Asp-298. Residue Cys-323 is the Nucleophile of the active site. Glu-357 acts as the Proton acceptor in catalysis.

It belongs to the class I-like SAM-binding methyltransferase superfamily. RNA M5U methyltransferase family. TrmA subfamily.

The catalysed reaction is uridine(54) in tRNA + S-adenosyl-L-methionine = 5-methyluridine(54) in tRNA + S-adenosyl-L-homocysteine + H(+). It carries out the reaction uridine(341) in tmRNA + S-adenosyl-L-methionine = 5-methyluridine(341) in tmRNA + S-adenosyl-L-homocysteine + H(+). In terms of biological role, dual-specificity methyltransferase that catalyzes the formation of 5-methyluridine at position 54 (m5U54) in all tRNAs, and that of position 341 (m5U341) in tmRNA (transfer-mRNA). The protein is tRNA/tmRNA (uracil-C(5))-methyltransferase of Nautilia profundicola (strain ATCC BAA-1463 / DSM 18972 / AmH).